The primary structure comprises 414 residues: Protein IQ-DOMAIN 8 (414 aa).

The Nuclear localization signal 1 motif lies at 14-21; it reads NKKNITDD. A disordered region spans residues 40–61; sequence LISSSKGFKSRGGSYGTPSLGS. 3 consecutive IQ domains span residues 92–120, 121–143, and 144–169; these read REWA…AVVR, IQAI…CMQA, and LVRV…EKPS. The calmodulin-binding stretch occupies residues 119-132; sequence VRIQAIFRGRQVRK. Disordered stretches follow at residues 156 to 190, 218 to 244, and 262 to 329; these read NRGP…SPGS, HQPR…SCKS, and GRLM…SGSF. The segment covering 164 to 184 has biased composition (basic and acidic residues); it reads ELEKPSDQQKDDPAKQAEKGW. The span at 231–244 shows a compositional bias: polar residues; it reads KQGSVKKNNGSCKS. A compositionally biased stretch (basic and acidic residues) spans 274–289; it reads NARKSESSVSEHDTVQ. Over residues 307 to 328 the composition is skewed to low complexity; that stretch reads SSSATSSESSSTSQSPVPFSGS. The Nuclear localization signal 2 motif lies at 336 to 343; sequence YRKPSYMS. The tract at residues 347-398 is disordered; the sequence is SIKAKQRRSGSSSSCSKTPFEKKQSMSYNGDVNVRRSAGSDPLNNQWTDLYP.

Belongs to the IQD family. As to quaternary structure, binds to multiple calmodulin (CaM) in the presence of Ca(2+) and CaM-like proteins.

The protein localises to the nucleus. Its subcellular location is the cytoplasm. It localises to the cytoskeleton. The protein resides in the nucleus envelope. Its function is as follows. May be involved in cooperative interactions with calmodulins or calmodulin-like proteins. Recruits calmodulin proteins to microtubules, thus being a potential scaffold in cellular signaling and trafficking. May associate with nucleic acids and regulate gene expression at the transcriptional or post-transcriptional level. This is Protein IQ-DOMAIN 8 from Arabidopsis thaliana (Mouse-ear cress).